The sequence spans 349 residues: Septin-2 (349 aa).

In terms of domain architecture, Septin-type G spans 33–305; that stretch reads KGFEFTLMVV…ENFRSERLKR (273 aa). Positions 43–50 are G1 motif; it reads GESGLGKS. GTP-binding positions include 43–50, Thr-77, Gly-103, 182–190, Gly-240, and Arg-255; these read GESGLGKS and KADTLTLKE. The G3 motif stretch occupies residues 100 to 103; sequence DTPG. The tract at residues 181–184 is G4 motif; the sequence is AKAD. The important for dimerization stretch occupies residues 259 to 269; it reads WGVVEVENPEH.

The protein belongs to the TRAFAC class TrmE-Era-EngA-EngB-Septin-like GTPase superfamily. Septin GTPase family. As to quaternary structure, septins polymerize into heterooligomeric protein complexes that form filaments, and associate with cellular membranes, actin filaments and microtubules. GTPase activity is required for filament formation. Can form heterooligomers with other family members and form filaments.

Its subcellular location is the cytoplasm. The protein resides in the cytoskeleton. It is found in the spindle. The protein localises to the cleavage furrow. It localises to the midbody. Its subcellular location is the cell cortex. The protein resides in the cell projection. It is found in the cilium membrane. Functionally, filament-forming cytoskeletal GTPase. Required for normal organization of the actin cytoskeleton. Plays a role in the biogenesis of polarized columnar-shaped epithelium by maintaining polyglutamylated microtubules, thus facilitating efficient vesicle transport, and by impeding MAP4 binding to tubulin. Required for the progression through mitosis. Forms a scaffold at the midplane of the mitotic splindle required to maintain CENPE localization at kinetochores and consequently chromosome congression. During anaphase, may be required for chromosome segregation and spindle elongation. Plays a role in ciliogenesis and collective cell movements. In cilia, required for the integrity of the diffusion barrier at the base of the primary cilium that prevents diffusion of transmembrane proteins between the cilia and plasma membranes. This Gallus gallus (Chicken) protein is Septin-2.